The following is a 353-amino-acid chain: MIRFSESITSQQDIDVVVGENALSYLREIQNKKAIFYSSSVNIDFIKPHLEGEYTLVPIKDGEEAKDIQYSLELLKVLFDGGFDRGDYVIAIGGGSVTDTVGFIASTYMRGLNLINVPTTLLGMVDAGIGGKNGVNFGRIKNIIGTFYQPRAIIADLRFLISLPSEEVRKGLAEVIKYGLVLDKELYDFLALNKNSVLSKDPESLEYVVQRSIQDKLSVVKEDERETKGVRIVLNFGHTIGHAIEAGSGFSIPHGYAISVGMVCEAKIAEEMGYSEEGVVEDTVWILSHYNLPISIDELSSKIDLKEALFALSKDKKVRNGVLLMPFPTRIGDWKRVEVPIETLKGFAEQCLK.

NAD(+) is bound by residues 61-66 (DGEEAK), 119-120 (TT), lysine 132, and lysine 141. Residues glutamate 174, histidine 238, and histidine 254 each coordinate Zn(2+).

Belongs to the sugar phosphate cyclases superfamily. Dehydroquinate synthase family. Requires Co(2+) as cofactor. Zn(2+) serves as cofactor. NAD(+) is required as a cofactor.

Its subcellular location is the cytoplasm. The enzyme catalyses 7-phospho-2-dehydro-3-deoxy-D-arabino-heptonate = 3-dehydroquinate + phosphate. It functions in the pathway metabolic intermediate biosynthesis; chorismate biosynthesis; chorismate from D-erythrose 4-phosphate and phosphoenolpyruvate: step 2/7. Functionally, catalyzes the conversion of 3-deoxy-D-arabino-heptulosonate 7-phosphate (DAHP) to dehydroquinate (DHQ). The polypeptide is 3-dehydroquinate synthase (Sulfolobus acidocaldarius (strain ATCC 33909 / DSM 639 / JCM 8929 / NBRC 15157 / NCIMB 11770)).